We begin with the raw amino-acid sequence, 122 residues long: Large ribosomal subunit protein uL24 (122 aa).

It belongs to the universal ribosomal protein uL24 family. In terms of assembly, part of the 50S ribosomal subunit.

One of two assembly initiator proteins, it binds directly to the 5'-end of the 23S rRNA, where it nucleates assembly of the 50S subunit. In terms of biological role, located at the polypeptide exit tunnel on the outside of the subunit. The polypeptide is Large ribosomal subunit protein uL24 (Methanosarcina mazei (strain ATCC BAA-159 / DSM 3647 / Goe1 / Go1 / JCM 11833 / OCM 88) (Methanosarcina frisia)).